Reading from the N-terminus, the 299-residue chain is tRNA dimethylallyltransferase (299 aa).

Position 13–20 (13–20 (GATASGKT)) interacts with ATP. 15–20 (TASGKT) contacts substrate. The tract at residues 38–41 (DSRQ) is interaction with substrate tRNA.

Belongs to the IPP transferase family. As to quaternary structure, monomer. Mg(2+) serves as cofactor.

It carries out the reaction adenosine(37) in tRNA + dimethylallyl diphosphate = N(6)-dimethylallyladenosine(37) in tRNA + diphosphate. Catalyzes the transfer of a dimethylallyl group onto the adenine at position 37 in tRNAs that read codons beginning with uridine, leading to the formation of N6-(dimethylallyl)adenosine (i(6)A). The polypeptide is tRNA dimethylallyltransferase (Prochlorococcus marinus (strain MIT 9312)).